A 63-amino-acid polypeptide reads, in one-letter code: Megourin-3 (63 aa).

As to quaternary structure, monomer. Post-translationally, contains four disulfide bonds.

Its subcellular location is the secreted. Its function is as follows. Has antimicrobial activity against Gram-positive bacteria and fungi. In Megoura viciae (Vetch aphid), this protein is Megourin-3.